A 68-amino-acid polypeptide reads, in one-letter code: DNA-directed RNA polymerase subunit omega (68 aa).

This sequence belongs to the RNA polymerase subunit omega family. The RNAP catalytic core consists of 2 alpha, 1 beta, 1 beta' and 1 omega subunit. When a sigma factor is associated with the core the holoenzyme is formed, which can initiate transcription.

The catalysed reaction is RNA(n) + a ribonucleoside 5'-triphosphate = RNA(n+1) + diphosphate. Promotes RNA polymerase assembly. Latches the N- and C-terminal regions of the beta' subunit thereby facilitating its interaction with the beta and alpha subunits. The polypeptide is DNA-directed RNA polymerase subunit omega (Desulforapulum autotrophicum (strain ATCC 43914 / DSM 3382 / VKM B-1955 / HRM2) (Desulfobacterium autotrophicum)).